Reading from the N-terminus, the 407-residue chain is Peptidase T (407 aa).

His82 serves as a coordination point for Zn(2+). Residue Asp84 is part of the active site. Asp143 serves as a coordination point for Zn(2+). The active-site Proton acceptor is the Glu177. Residues Glu178, Asp200, and His382 each contribute to the Zn(2+) site.

It belongs to the peptidase M20B family. Requires Zn(2+) as cofactor.

It is found in the cytoplasm. The catalysed reaction is Release of the N-terminal residue from a tripeptide.. Functionally, cleaves the N-terminal amino acid of tripeptides. The protein is Peptidase T of Streptococcus pyogenes serotype M28 (strain MGAS6180).